Here is a 218-residue protein sequence, read N- to C-terminus: Ribosome maturation factor RimM (218 aa).

One can recognise a PRC barrel domain in the interval 141-214 (GELWWDRDLV…HIVVDPPPGL (74 aa)).

This sequence belongs to the RimM family. In terms of assembly, binds ribosomal protein uS19.

It localises to the cytoplasm. Its function is as follows. An accessory protein needed during the final step in the assembly of 30S ribosomal subunit, possibly for assembly of the head region. Essential for efficient processing of 16S rRNA. May be needed both before and after RbfA during the maturation of 16S rRNA. It has affinity for free ribosomal 30S subunits but not for 70S ribosomes. The chain is Ribosome maturation factor RimM from Parafrankia sp. (strain EAN1pec).